Consider the following 203-residue polypeptide: ATP-dependent Clp protease proteolytic subunit (203 aa).

Serine 107 serves as the catalytic Nucleophile. Residue histidine 132 is part of the active site.

It belongs to the peptidase S14 family. In terms of assembly, fourteen ClpP subunits assemble into 2 heptameric rings which stack back to back to give a disk-like structure with a central cavity, resembling the structure of eukaryotic proteasomes.

The protein localises to the cytoplasm. It carries out the reaction Hydrolysis of proteins to small peptides in the presence of ATP and magnesium. alpha-casein is the usual test substrate. In the absence of ATP, only oligopeptides shorter than five residues are hydrolyzed (such as succinyl-Leu-Tyr-|-NHMec, and Leu-Tyr-Leu-|-Tyr-Trp, in which cleavage of the -Tyr-|-Leu- and -Tyr-|-Trp bonds also occurs).. In terms of biological role, cleaves peptides in various proteins in a process that requires ATP hydrolysis. Has a chymotrypsin-like activity. Plays a major role in the degradation of misfolded proteins. This Shewanella piezotolerans (strain WP3 / JCM 13877) protein is ATP-dependent Clp protease proteolytic subunit.